Reading from the N-terminus, the 701-residue chain is Elongation factor G (701 aa).

The tr-type G domain occupies 8 to 290 (ERYRNIGISA…AVVDYLPAPT (283 aa)). GTP is bound by residues 17-24 (AHIDAGKT), 88-92 (DTPGH), and 142-145 (NKMD).

It belongs to the TRAFAC class translation factor GTPase superfamily. Classic translation factor GTPase family. EF-G/EF-2 subfamily.

The protein resides in the cytoplasm. Its function is as follows. Catalyzes the GTP-dependent ribosomal translocation step during translation elongation. During this step, the ribosome changes from the pre-translocational (PRE) to the post-translocational (POST) state as the newly formed A-site-bound peptidyl-tRNA and P-site-bound deacylated tRNA move to the P and E sites, respectively. Catalyzes the coordinated movement of the two tRNA molecules, the mRNA and conformational changes in the ribosome. In Aeromonas hydrophila subsp. hydrophila (strain ATCC 7966 / DSM 30187 / BCRC 13018 / CCUG 14551 / JCM 1027 / KCTC 2358 / NCIMB 9240 / NCTC 8049), this protein is Elongation factor G.